The primary structure comprises 361 residues: Transcription factor MafA (361 aa).

The residue at position 14 (Ser14) is a Phosphoserine. Lys32 participates in a covalent cross-link: Glycyl lysine isopeptide (Lys-Gly) (interchain with G-Cter in SUMO2). Disordered regions lie at residues 40–105 and 175–228; these read RFCH…VGGA and GGAD…AGHH. Positions 46–76 are enriched in low complexity; sequence PPGSLSSTPLSTPCSSVPSSPSFCAPSPGTG. Ser49 bears the Phosphoserine mark. 2 positions are modified to phosphothreonine: Thr53 and Thr57. 2 positions are modified to phosphoserine: Ser61 and Ser65. Over residues 183 to 211 the composition is skewed to basic residues; the sequence is GHHHGAHHTAHHHHSAHHHHHHHHHHGGS. Over residues 212-226 the composition is skewed to gly residues; the sequence is GHHGGGAGHGGGGAG. The segment at 262 to 287 is basic motif; it reads RLKQKRRTLKNRGYAQSCRFKRVQQR. A bZIP domain is found at 262–325; it reads RLKQKRRTLK…DLYKEKYEKL (64 aa). Residues 290–311 are leucine-zipper; it reads LESEKCQLQSQVEQLKLEVGRL. The tract at residues 324–361 is disordered; it reads KLAGRGGPGGAGGAGFPREPSPAQAGPGAAKGAPDFFL. A compositionally biased stretch (gly residues) spans 327-338; the sequence is GRGGPGGAGGAG. A compositionally biased stretch (low complexity) spans 345 to 361; it reads PAQAGPGAAKGAPDFFL.

It belongs to the bZIP family. As to quaternary structure, forms homodimers. Monomers and dimers are able to bind DNA, but the off-rate is faster for monomers. Interacts with NEUROD1 and PDX1. May interact with MAFB, FOS, JUN and PCAF. Ubiquitinated, leading to its degradation by the proteasome. In terms of processing, phosphorylated at tyrosines.

The protein resides in the nucleus. Its function is as follows. Transcription factor that activates insulin gene expression. Acts synergistically with NEUROD1/BETA2 and PDX1. Binds the insulin enhancer C1/RIPE3b element. Binds to consensus TRE-type MARE 5'-TGCTGACTCAGCA-3' DNA sequence. The chain is Transcription factor MafA (Mafa) from Rattus norvegicus (Rat).